The chain runs to 962 residues: Ubiquitin carboxyl-terminal hydrolase 4 (962 aa).

Residues 11–122 form the DUSP domain; that stretch reads PDVETQKTEL…GQQPIVRKVV (112 aa). The segment at 27–216 is necessary for interaction with SART3; it reads TLQRGAQWYL…LYQGQVLVIE (190 aa). A Nuclear export signal motif is present at residues 133–141; it reads VEVYLLELK. Positions 142–226 constitute a Ubiquitin-like 1 domain; the sequence is LCENSDPTNV…PQNEDGTWPR (85 aa). Residues 220-249 are disordered; it reads EDGTWPRQSLQSKSSTAPSRNFTTSSKPSA. Over residues 225–249 the composition is skewed to polar residues; the sequence is PRQSLQSKSSTAPSRNFTTSSKPSA. The required for USP4 activation by providing conformational flexibility between the DUSP and catalytic domains stretch occupies residues 229–295; that stretch reads LQSKSSTAPS…SYNCQEPPSP (67 aa). Positions 302-922 constitute a USP domain; that stretch reads CGLGNLGNTC…AAYVLFYQRR (621 aa). Cysteine 311 acts as the Nucleophile in catalysis. Positions 384-386 are regulates ubiquitin dissociation; it reads PQF. The segment at 405-407 is necessary for interaction with RBL2; it reads LHE. Phosphoserine is present on serine 445. The necessary for interaction with RB1 and RBL2 stretch occupies residues 459–463; the sequence is LVCPE. Zn(2+)-binding residues include cysteine 461 and cysteine 464. In terms of domain architecture, Ubiquitin-like 2 spans 483 to 571; sequence LKKDRIMEVF…IFVYEVCNTS (89 aa). Positions 485–774 are interacts with DUSP and ubiquitin-like 1 domains and is required for USP4 activation; sequence KDRIMEVFLV…SQPQKKKKAA (290 aa). A disordered region spans residues 638–699; it reads EFLSSPLEPG…SESAQKVKGQ (62 aa). Phosphoserine is present on serine 655. Positions 657 to 666 are enriched in acidic residues; it reads EGDEEEEMDH. Phosphoserine is present on residues serine 675 and serine 680. Residues 766–771 carry the Nuclear localization signal motif; the sequence is QPQKKK. Positions 798 and 801 each coordinate Zn(2+). Catalysis depends on histidine 880, which acts as the Proton acceptor. Positions 928-937 are enriched in low complexity; that stretch reads STSSLGSFPG. Residues 928 to 962 are disordered; it reads STSSLGSFPGSDGGVKLSSSHQGMGDEEAYNMDTN. Residues 952-962 are compositionally biased toward acidic residues; it reads GDEEAYNMDTN.

It belongs to the peptidase C19 family. USP4 subfamily. In terms of assembly, interacts with RB1 (both dephosphorylated and hypophosphorylated forms). Interacts with RBL1 and RBL2. Interacts with ADORA2A (via cytoplasmic C-terminus); the interaction is direct. Interacts with SART3; recruits USP4 to its substrate PRPF3. Post-translationally, phosphorylated at Ser-445 by PKB/AKT1 in response to EGF stimulus, promoting its ability deubiquitinate RHEB. Monoubiquitinated by TRIM21. Ubiquitination does not lead to its proteasomal degradation. Autodeubiquitinated. As to expression, expressed in brain, kidney, liver and spleen (at protein level).

The protein resides in the cytoplasm. Its subcellular location is the nucleus. The enzyme catalyses Thiol-dependent hydrolysis of ester, thioester, amide, peptide and isopeptide bonds formed by the C-terminal Gly of ubiquitin (a 76-residue protein attached to proteins as an intracellular targeting signal).. Its activity is regulated as follows. The completion of the deubiquitinase reaction is mediated by the DUSP and ubiquitin-like 1 domains which promotes the release of ubiquitin from the catalytic site enabling subsequent reactions to occur. Its function is as follows. Deubiquitinating enzyme that removes conjugated ubiquitin from target proteins. Deubiquitinates PDPK1. Deubiquitinates TRIM21. Deubiquitinates receptor ADORA2A which increases the amount of functional receptor at the cell surface. Deubiquitinates HAS2. Deubiquitinates RHEB in response to EGF signaling, promoting mTORC1 signaling. May regulate mRNA splicing through deubiquitination of the U4 spliceosomal protein PRPF3. This may prevent its recognition by the U5 component PRPF8 thereby destabilizing interactions within the U4/U6.U5 snRNP. May also play a role in the regulation of quality control in the ER. The chain is Ubiquitin carboxyl-terminal hydrolase 4 (Usp4) from Mus musculus (Mouse).